The chain runs to 66 residues: uncharacterized protein (66 aa).

Residues 1-25 (MIVIILLFISIIVFLSVIQPQPSKN) form the signal peptide. A compositionally biased stretch (polar residues) spans 21 to 31 (QPSKNKSRQQA). Positions 21–66 (QPSKNKSRQQADSGYFGYSDHSSHHDGCSSDGGFSDSGCGGGGGGD) are disordered.

This is an uncharacterized protein from Bacillus subtilis (strain 168).